The primary structure comprises 162 residues: Nucleotide-binding protein SAV_4896 (162 aa).

Belongs to the YajQ family.

Functionally, nucleotide-binding protein. The chain is Nucleotide-binding protein SAV_4896 from Streptomyces avermitilis (strain ATCC 31267 / DSM 46492 / JCM 5070 / NBRC 14893 / NCIMB 12804 / NRRL 8165 / MA-4680).